A 494-amino-acid chain; its full sequence is Cytochrome P450 2A5 (494 aa).

Ser-131 is subject to Phosphoserine. Lys-379 is modified (N6-acetyllysine). Position 439 (Cys-439) interacts with heme.

This sequence belongs to the cytochrome P450 family. Heme serves as cofactor. As to expression, liver, with a strong circadian rhythmicity. Circadian expression is regulated by DBP.

The protein resides in the endoplasmic reticulum membrane. It is found in the microsome membrane. It catalyses the reaction an organic molecule + reduced [NADPH--hemoprotein reductase] + O2 = an alcohol + oxidized [NADPH--hemoprotein reductase] + H2O + H(+). In terms of biological role, exhibits a high coumarin 7-hydroxylase activity. The polypeptide is Cytochrome P450 2A5 (Cyp2a5) (Mus musculus (Mouse)).